We begin with the raw amino-acid sequence, 276 residues long: NH(3)-dependent NAD(+) synthetase (276 aa).

Position 51–58 (51–58 (GISGGVDS)) interacts with ATP. D57 contributes to the Mg(2+) binding site. Residue R148 coordinates deamido-NAD(+). Position 168 (T168) interacts with ATP. Position 173 (E173) interacts with Mg(2+). Residues K181 and D188 each contribute to the deamido-NAD(+) site. The ATP site is built by K197 and T219. 268–269 (HK) is a deamido-NAD(+) binding site.

The protein belongs to the NAD synthetase family. In terms of assembly, homodimer.

The enzyme catalyses deamido-NAD(+) + NH4(+) + ATP = AMP + diphosphate + NAD(+) + H(+). The protein operates within cofactor biosynthesis; NAD(+) biosynthesis; NAD(+) from deamido-NAD(+) (ammonia route): step 1/1. In terms of biological role, catalyzes the ATP-dependent amidation of deamido-NAD to form NAD. Uses ammonia as a nitrogen source. The sequence is that of NH(3)-dependent NAD(+) synthetase from Streptomyces coelicolor (strain ATCC BAA-471 / A3(2) / M145).